Reading from the N-terminus, the 224-residue chain is Peroxiredoxin-6 (224 aa).

Residues 5 to 169 (LLLGDVAPNF…ILRVVISLQL (165 aa)) form the Thioredoxin domain. Residues 31 to 40 (DSWGILFSHP) form a required and sufficient for targeting to lysosomes and lamellar bodies region. Thr44 carries the phosphothreonine modification. Catalysis depends on Cys47, which acts as the Cysteine sulfenic acid (-SOH) intermediate; for peroxidase activity. Lys63 is modified (N6-acetyllysine). Residue Tyr89 is modified to Phosphotyrosine. Catalysis depends on Asp140, which acts as the For phospholipase activity. Residue Thr177 is modified to Phosphothreonine; by MAPK. The residue at position 209 (Lys209) is an N6-acetyllysine; alternate. Position 209 is an N6-succinyllysine; alternate (Lys209).

It belongs to the peroxiredoxin family. Prx6 subfamily. Homodimer. Interacts with GSTP1; mediates PRDX6 glutathionylation and regeneration. Interacts with APEX1. Interacts with STH. May interact with FAM168B. May interact with HTR2A. Irreversibly inactivated by overoxidation of Cys-47 to sulfinic acid (Cys-SO(2)H) and sulfonic acid (Cys-SO(3)H) forms upon oxidative stress. In terms of processing, phosphorylation at Thr-177 by MAP kinases increases the phospholipase activity of the enzyme. The phosphorylated form exhibits a greater lysophosphatidylcholine acyltransferase activity compared to the non-phosphorylated form.

It localises to the cytoplasm. Its subcellular location is the lysosome. The catalysed reaction is a hydroperoxide + 2 glutathione = an alcohol + glutathione disulfide + H2O. It catalyses the reaction a 1,2-diacyl-sn-glycero-3-phosphocholine + H2O = a 1-acyl-sn-glycero-3-phosphocholine + a fatty acid + H(+). It carries out the reaction a 1-acyl-sn-glycero-3-phosphocholine + an acyl-CoA = a 1,2-diacyl-sn-glycero-3-phosphocholine + CoA. The enzyme catalyses 1-hexadecanoyl-sn-glycero-3-phosphocholine + hexadecanoyl-CoA = 1,2-dihexadecanoyl-sn-glycero-3-phosphocholine + CoA. The catalysed reaction is 1,2-dihexadecanoyl-sn-glycero-3-phosphocholine + H2O = 1-hexadecanoyl-sn-glycero-3-phosphocholine + hexadecanoate + H(+). MJ33 or lithium;[(2R)-1-hexadecoxy-3-(2,2,2-trifluoroethoxy)propan-2-yl] methyl phosphate inhibits its phospholipase A2 activity. CI-976 or 2,2-Dimethyl-N-(2,4,6-trimethoxyphenyl)dodecanamide inhibits its lysophosphatidylcholine acyltransferase activity. In terms of biological role, thiol-specific peroxidase that catalyzes the reduction of hydrogen peroxide and organic hydroperoxides to water and alcohols, respectively. Can reduce H(2)O(2) and short chain organic, fatty acid, and phospholipid hydroperoxides. Also has phospholipase activity, can therefore either reduce the oxidized sn-2 fatty acyl group of phospholipids (peroxidase activity) or hydrolyze the sn-2 ester bond of phospholipids (phospholipase activity). These activities are dependent on binding to phospholipids at acidic pH and to oxidized phospholipds at cytosolic pH. Plays a role in cell protection against oxidative stress by detoxifying peroxides and in phospholipid homeostasis. Exhibits acyl-CoA-dependent lysophospholipid acyltransferase which mediates the conversion of lysophosphatidylcholine (1-acyl-sn-glycero-3-phosphocholine or LPC) into phosphatidylcholine (1,2-diacyl-sn-glycero-3-phosphocholine or PC). Shows a clear preference for LPC as the lysophospholipid and for palmitoyl CoA as the fatty acyl substrate. The chain is Peroxiredoxin-6 (PRDX6) from Homo sapiens (Human).